The primary structure comprises 151 residues: Viral interleukin-17 (151 aa).

Positions 1–22 (MTFRKTSLVLLLLLSIDCIVKS) are cleaved as a signal peptide. Residues asparagine 36, asparagine 53, and asparagine 64 are each glycosylated (N-linked (GlcNAc...) asparagine; by host). Cystine bridges form between cysteine 90/cysteine 140 and cysteine 95/cysteine 142.

Belongs to the IL-17 family.

The protein localises to the secreted. In Saimiri sciureus (Common squirrel monkey), this protein is Viral interleukin-17 (13).